The chain runs to 65 residues: MAVQQNKKTPSKRGMRRAHDVLKKPTFSVDFSSGETHRRHHVTPDGYYRGKKVIFSKDENEEENE.

The tract at residues 1–45 (MAVQQNKKTPSKRGMRRAHDVLKKPTFSVDFSSGETHRRHHVTPD) is disordered.

Belongs to the bacterial ribosomal protein bL32 family.

This chain is Large ribosomal subunit protein bL32, found in Nitrosococcus oceani (strain ATCC 19707 / BCRC 17464 / JCM 30415 / NCIMB 11848 / C-107).